Here is a 447-residue protein sequence, read N- to C-terminus: Vasoactive intestinal polypeptide receptor (447 aa).

At 1-103 (MCDVVNEIEL…VDDDSFFRSV (103 aa)) the chain is on the extracellular side. Intrachain disulfides connect Cys-15–Cys-36, Cys-27–Cys-69, and Cys-50–Cys-86. Residues Asn-17, Asn-22, Asn-64, and Asn-91 are each glycosylated (N-linked (GlcNAc...) asparagine). A helical transmembrane segment spans residues 104–128 (KIGYTIGHSVSLISLTTAIVILCMS). Topologically, residues 129 to 135 (RKLHCTR) are cytoplasmic. A helical membrane pass occupies residues 136-155 (NYIHMHLFVSFILKAIAVFV). At 156-178 (KDAVLYDVIQESDNCSTASVGCK) the chain is on the extracellular side. Asn-169 carries N-linked (GlcNAc...) asparagine glycosylation. A disulfide bridge connects residues Cys-177 and Cys-247. The chain crosses the membrane as a helical span at residues 179-202 (AVIVFFQYCIMASFFWLLVEGLYL). Residues 203 to 216 (HALLAVSFFSERKY) are Cytoplasmic-facing. A helical membrane pass occupies residues 217-238 (FWWYILIGWGGPTIFIMAWSFA). Residues 239-256 (KAYFNDVGCWDIIENSDL) are Extracellular-facing. A helical transmembrane segment spans residues 257–280 (FWWIIKTPILASILMNFILFICII). Topologically, residues 281-305 (RILRQKINCPDIGRNESNQYSRLAK) are cytoplasmic. A helical membrane pass occupies residues 306 to 325 (STLLLIPLFGINFIIFAFIP). Residues 326–337 (ENIKTELRLVFD) lie on the Extracellular side of the membrane. The chain crosses the membrane as a helical span at residues 338–357 (LILGSFQGFVVAVLYCFLNG). The Cytoplasmic segment spans residues 358–447 (EVQAEIKRKW…KGHEDVREVS (90 aa)).

The protein belongs to the G-protein coupled receptor 2 family.

The protein resides in the cell membrane. This is a receptor for VIP. The activity of this receptor is mediated by G proteins which activate adenylyl cyclase. This Carassius auratus (Goldfish) protein is Vasoactive intestinal polypeptide receptor (vipr1).